Consider the following 412-residue polypeptide: MLRWLTAGESHGPELIAVLEGLPAGVPVSLDGIRADLARRKLGYGRGARMAFEQDELSLSTGVVHGRTLGSPIAVRIGNTEWPKWVDIMSPEPVDPEKLQGARAAALTRPRPGHADLVGMQKYDFDEARPVLERASARETAARVALGAVARAFLAELGITLVSHTLSIGPVRVPEGAPLPTPADVDALDADPLRCFHPETSARMVAEVDDTKSSGDTVGGVVEVLAYDLPPGLGSHVHWDRRLDSKLAAALMGIQAIKGVEVGDGFLTTTRRGSEAHDELFSTDAGIGRSTDRAGGTEGGMSTGTVLRVRAGMKPIATVPRALRTIDTATGGAAPANHQRSDVCAVPAAGVVAEAMVALTLADAVLEKFGGDSVGETLRNLRGYLDAIPEGRRTGADLVDEADAAPPAAPEA.

Residues Arg40 and Arg46 each contribute to the NADP(+) site. FMN is bound by residues 134 to 136, 255 to 256, Gly299, 314 to 318, and Arg340; these read RAS, QA, and KPIAT.

The protein belongs to the chorismate synthase family. In terms of assembly, homotetramer. The cofactor is FMNH2.

The catalysed reaction is 5-O-(1-carboxyvinyl)-3-phosphoshikimate = chorismate + phosphate. Its pathway is metabolic intermediate biosynthesis; chorismate biosynthesis; chorismate from D-erythrose 4-phosphate and phosphoenolpyruvate: step 7/7. Functionally, catalyzes the anti-1,4-elimination of the C-3 phosphate and the C-6 proR hydrogen from 5-enolpyruvylshikimate-3-phosphate (EPSP) to yield chorismate, which is the branch point compound that serves as the starting substrate for the three terminal pathways of aromatic amino acid biosynthesis. This reaction introduces a second double bond into the aromatic ring system. The protein is Chorismate synthase of Clavibacter michiganensis subsp. michiganensis (strain NCPPB 382).